Here is a 491-residue protein sequence, read N- to C-terminus: Lysine--tRNA ligase (491 aa).

Residues Glu400 and Glu407 each contribute to the Mg(2+) site.

Belongs to the class-II aminoacyl-tRNA synthetase family. In terms of assembly, homodimer. It depends on Mg(2+) as a cofactor.

It is found in the cytoplasm. It catalyses the reaction tRNA(Lys) + L-lysine + ATP = L-lysyl-tRNA(Lys) + AMP + diphosphate. The polypeptide is Lysine--tRNA ligase (Mesomycoplasma hyopneumoniae (strain 7448) (Mycoplasma hyopneumoniae)).